A 57-amino-acid polypeptide reads, in one-letter code: Large ribosomal subunit protein bL32 (57 aa).

The tract at residues 1 to 38 (MAVQQNKPTRSKRGMRRSHDALTAVTSLSVDKTSGEKH) is disordered.

The protein belongs to the bacterial ribosomal protein bL32 family.

In Escherichia coli O7:K1 (strain IAI39 / ExPEC), this protein is Large ribosomal subunit protein bL32.